A 212-amino-acid chain; its full sequence is Large ribosomal subunit protein uL1 (212 aa).

The protein belongs to the universal ribosomal protein uL1 family. In terms of assembly, part of the 50S ribosomal subunit.

Functionally, binds directly to 23S rRNA. Probably involved in E site tRNA release. In terms of biological role, protein L1 is also a translational repressor protein, it controls the translation of its operon by binding to its mRNA. The chain is Large ribosomal subunit protein uL1 from Methanobrevibacter smithii (strain ATCC 35061 / DSM 861 / OCM 144 / PS).